A 70-amino-acid chain; its full sequence is ATP synthase subunit c (70 aa).

2 helical membrane passes run 4–24 (IASAIAIGLAALGAGIGNGLI) and 47–67 (FVGVALVEALPIIAVVIAFMV).

Belongs to the ATPase C chain family. As to quaternary structure, F-type ATPases have 2 components, F(1) - the catalytic core - and F(0) - the membrane proton channel. F(1) has five subunits: alpha(3), beta(3), gamma(1), delta(1), epsilon(1). F(0) has three main subunits: a(1), b(2) and c(10-14). The alpha and beta chains form an alternating ring which encloses part of the gamma chain. F(1) is attached to F(0) by a central stalk formed by the gamma and epsilon chains, while a peripheral stalk is formed by the delta and b chains.

It is found in the cell membrane. F(1)F(0) ATP synthase produces ATP from ADP in the presence of a proton or sodium gradient. F-type ATPases consist of two structural domains, F(1) containing the extramembraneous catalytic core and F(0) containing the membrane proton channel, linked together by a central stalk and a peripheral stalk. During catalysis, ATP synthesis in the catalytic domain of F(1) is coupled via a rotary mechanism of the central stalk subunits to proton translocation. In terms of biological role, key component of the F(0) channel; it plays a direct role in translocation across the membrane. A homomeric c-ring of between 10-14 subunits forms the central stalk rotor element with the F(1) delta and epsilon subunits. The sequence is that of ATP synthase subunit c from Priestia megaterium (strain ATCC 12872 / QMB1551) (Bacillus megaterium).